An 87-amino-acid polypeptide reads, in one-letter code: MANTKSALKRIRQTATRTARNRAVTSKLKTLRKKVAAAVETSDKEAAAAAYNTFSSAVDKAAKVGTIPANRAANYKSKAAKAIAKIA.

Residues 1–26 (MANTKSALKRIRQTATRTARNRAVTS) are disordered. Low complexity predominate over residues 13 to 23 (QTATRTARNRA).

Belongs to the bacterial ribosomal protein bS20 family.

Binds directly to 16S ribosomal RNA. This Akkermansia muciniphila (strain ATCC BAA-835 / DSM 22959 / JCM 33894 / BCRC 81048 / CCUG 64013 / CIP 107961 / Muc) protein is Small ribosomal subunit protein bS20.